We begin with the raw amino-acid sequence, 402 residues long: Diaminopimelate decarboxylase (402 aa).

Lys-45 carries the N6-(pyridoxal phosphate)lysine modification. Pyridoxal 5'-phosphate-binding positions include Gly-224 and 259-262; that span reads EPGR. Residues Arg-262, Arg-298, and Tyr-302 each coordinate substrate. The active-site Proton donor is the Cys-327. Glu-328 and Tyr-356 together coordinate substrate. Residue Tyr-356 coordinates pyridoxal 5'-phosphate.

Belongs to the Orn/Lys/Arg decarboxylase class-II family. LysA subfamily. Homodimer. Pyridoxal 5'-phosphate is required as a cofactor.

The catalysed reaction is meso-2,6-diaminopimelate + H(+) = L-lysine + CO2. It participates in amino-acid biosynthesis; L-lysine biosynthesis via DAP pathway; L-lysine from DL-2,6-diaminopimelate: step 1/1. Its function is as follows. Specifically catalyzes the decarboxylation of meso-diaminopimelate (meso-DAP) to L-lysine. The protein is Diaminopimelate decarboxylase of Campylobacter jejuni subsp. jejuni serotype O:2 (strain ATCC 700819 / NCTC 11168).